Reading from the N-terminus, the 1342-residue chain is Receptor tyrosine-protein kinase erbB-3 (1342 aa).

An N-terminal signal peptide occupies residues 1–19 (MRANDALQVLGLLFSLARG). Residues 20 to 643 (SEVGNSQAVC…LVLIGKTHLT (624 aa)) are Extracellular-facing. Cys-29 and Cys-56 are disulfide-bonded. Asn-126 is a glycosylation site (N-linked (GlcNAc...) asparagine). 12 disulfide bridges follow: Cys-156-Cys-183, Cys-186-Cys-194, Cys-190-Cys-202, Cys-210-Cys-218, Cys-214-Cys-226, Cys-227-Cys-235, Cys-231-Cys-243, Cys-246-Cys-255, Cys-259-Cys-286, Cys-290-Cys-301, Cys-305-Cys-320, and Cys-323-Cys-327. Residue Asn-250 is glycosylated (N-linked (GlcNAc...) asparagine). Asn-353, Asn-408, Asn-414, Asn-437, and Asn-469 each carry an N-linked (GlcNAc...) asparagine glycan. 10 disulfide bridges follow: Cys-500–Cys-509, Cys-504–Cys-517, Cys-520–Cys-529, Cys-533–Cys-549, Cys-552–Cys-565, Cys-556–Cys-573, Cys-576–Cys-585, Cys-589–Cys-610, Cys-613–Cys-621, and Cys-617–Cys-629. N-linked (GlcNAc...) asparagine glycosylation is present at Asn-522. Asn-566 carries N-linked (GlcNAc...) asparagine glycosylation. The N-linked (GlcNAc...) asparagine glycan is linked to Asn-616. A helical transmembrane segment spans residues 644-664 (MALTVIAGLVVIFMMLGGTFL). At 665 to 1342 (YWRGRRIQNK…LFPKANAQRT (678 aa)) the chain is on the cytoplasmic side. Ser-686 carries the post-translational modification Phosphoserine. Positions 709–966 (LRKLKVLGSG…TFKELANEFT (258 aa)) constitute a Protein kinase domain. ATP contacts are provided by residues 715 to 723 (LGSGVFGTV), Lys-742, 788 to 790 (QYL), and 834 to 839 (NLAARN). Catalysis depends on Asn-834, which acts as the Proton acceptor. Disordered regions lie at residues 980–999 (RESG…TNKK) and 1033–1152 (LPVG…PGLE). The residue at position 982 (Ser-982) is a Phosphoserine. Polar residues predominate over residues 1042–1075 (RGSQSLLSPSSGYMPMNQGNLGESCQESAVSGSS).

Belongs to the protein kinase superfamily. Tyr protein kinase family. EGF receptor subfamily. Monomer and homodimer. Heterodimer with each of the other ERBB receptors (Potential). Interacts with CSPG5. Interacts with GRB7. Interacts with MUC1. Interacts with MYOC. Interacts with isoform 2 of PA2G4. Found in a ternary complex with NRG1 and ITGAV:ITGB3 or ITGA6:ITGB4. Post-translationally, autophosphorylated. Ligand-binding increases phosphorylation on tyrosine residues and promotes its association with the p85 subunit of phosphatidylinositol 3-kinase. As to expression, epithelial tissues and brain.

The protein resides in the cell membrane. It localises to the secreted. It catalyses the reaction L-tyrosyl-[protein] + ATP = O-phospho-L-tyrosyl-[protein] + ADP + H(+). Tyrosine-protein kinase that plays an essential role as cell surface receptor for neuregulins. Binds to neuregulin-1 (NRG1) and is activated by it; ligand-binding increases phosphorylation on tyrosine residues and promotes its association with the p85 subunit of phosphatidylinositol 3-kinase. May also be activated by CSPG5. Involved in the regulation of myeloid cell differentiation. The chain is Receptor tyrosine-protein kinase erbB-3 (ERBB3) from Homo sapiens (Human).